The primary structure comprises 461 residues: Argininosuccinate lyase (461 aa).

It belongs to the lyase 1 family. Argininosuccinate lyase subfamily.

It localises to the cytoplasm. It carries out the reaction 2-(N(omega)-L-arginino)succinate = fumarate + L-arginine. It participates in amino-acid biosynthesis; L-arginine biosynthesis; L-arginine from L-ornithine and carbamoyl phosphate: step 3/3. With respect to regulation, strongly inhibited by L-arginine. Inhibitory effects are lowered at pH 7.0 compared to those at pH 8.0. At 42 degrees Celsius and pH 8.0, activity decreases to 77% and 25% in the presence of 1 mM and 10 mM arginine, respectively. The other amino and organic acids do not affect activity. Catalyzes the last step of arginine biosynthesis, the conversion of argininosuccinate into L-arginine and fumarate. The polypeptide is Argininosuccinate lyase (Nostoc sp. (strain PCC 7120 / SAG 25.82 / UTEX 2576)).